A 398-amino-acid chain; its full sequence is Phosphoglycerate kinase (398 aa).

Residues 23–25 (DLN), arginine 38, 61–64 (HFGR), arginine 119, and arginine 152 each bind substrate. Residues lysine 202, glutamate 324, and 354-357 (GGDT) each bind ATP.

The protein belongs to the phosphoglycerate kinase family. In terms of assembly, monomer.

It is found in the cytoplasm. It catalyses the reaction (2R)-3-phosphoglycerate + ATP = (2R)-3-phospho-glyceroyl phosphate + ADP. It participates in carbohydrate degradation; glycolysis; pyruvate from D-glyceraldehyde 3-phosphate: step 2/5. The chain is Phosphoglycerate kinase from Bradyrhizobium diazoefficiens (strain JCM 10833 / BCRC 13528 / IAM 13628 / NBRC 14792 / USDA 110).